The chain runs to 424 residues: Adenylosuccinate synthetase 1 (424 aa).

GTP is bound by residues 12-18 (GDEGKGK) and 40-42 (GHT). The Proton acceptor role is filled by Asp-13. 2 residues coordinate Mg(2+): Asp-13 and Gly-40. IMP-binding positions include 13–16 (DEGK), 38–41 (NAGH), Thr-127, Arg-141, Thr-236, and Arg-304. His-41 acts as the Proton donor in catalysis. 300-306 (ARTGRPR) contributes to the substrate binding site. GTP contacts are provided by residues Arg-306, 332-334 (KLD), and 413-415 (GVG).

This sequence belongs to the adenylosuccinate synthetase family. Homodimer. Mg(2+) is required as a cofactor.

It localises to the cytoplasm. The catalysed reaction is IMP + L-aspartate + GTP = N(6)-(1,2-dicarboxyethyl)-AMP + GDP + phosphate + 2 H(+). It participates in purine metabolism; AMP biosynthesis via de novo pathway; AMP from IMP: step 1/2. Plays an important role in the de novo pathway of purine nucleotide biosynthesis. Catalyzes the first committed step in the biosynthesis of AMP from IMP. In Methanosarcina acetivorans (strain ATCC 35395 / DSM 2834 / JCM 12185 / C2A), this protein is Adenylosuccinate synthetase 1.